We begin with the raw amino-acid sequence, 95 residues long: uncharacterized protein (95 aa).

Repeat copies occupy residues 67–74 (GCGCGCGC) and 85–92 (CGGCCGCG). The segment at 67-92 (GCGCGCGCATVAAVSPVPCGGCCGCG) is 2 X 8 AA approximate repeats.

This is an uncharacterized protein from Caenorhabditis elegans.